The primary structure comprises 556 residues: 2,3-bisphosphoglycerate-independent phosphoglycerate mutase (556 aa).

Mn(2+)-binding residues include aspartate 25 and serine 78. Serine 78 acts as the Phosphoserine intermediate in catalysis. Substrate contacts are provided by residues histidine 137, 167–168 (RD), arginine 203, arginine 210, 283–286 (RADR), and lysine 358. Mn(2+)-binding residues include aspartate 427, histidine 431, aspartate 468, histidine 469, and histidine 498.

Belongs to the BPG-independent phosphoglycerate mutase family. In terms of assembly, monomer. Mn(2+) serves as cofactor. As to expression, found ubiquitously in germinating seed.

It is found in the cytoplasm. The catalysed reaction is (2R)-2-phosphoglycerate = (2R)-3-phosphoglycerate. It functions in the pathway carbohydrate degradation; glycolysis; pyruvate from D-glyceraldehyde 3-phosphate: step 3/5. Functionally, catalyzes the interconversion of 2-phosphoglycerate and 3-phosphoglycerate. The sequence is that of 2,3-bisphosphoglycerate-independent phosphoglycerate mutase from Ricinus communis (Castor bean).